The following is a 633-amino-acid chain: Probable methyltransferase PMT15 (633 aa).

Over 1 to 24 (MGNYRWPSKLSKLSLRAKQTNLYR) the chain is Cytoplasmic. Residues 25–45 (VILIAILCVTFYFVGVWQHSG) traverse the membrane as a helical; Signal-anchor for type II membrane protein segment. Over 46–633 (RGISRSSISN…APAPDQSSDP (588 aa)) the chain is Lumenal. N-linked (GlcNAc...) asparagine glycosylation is found at Asn113 and Asn298.

Belongs to the methyltransferase superfamily.

The protein resides in the golgi apparatus membrane. This is Probable methyltransferase PMT15 from Arabidopsis thaliana (Mouse-ear cress).